Here is a 743-residue protein sequence, read N- to C-terminus: MSENHETVVSELNEESGGGCPVAHERAPHPTQGGGNRGWWPNRLNLKILAKNPAVANPLGEEFDYAAAFRTLDLPAVKRDIAQVLTTSQDWWPADYGHYGPFMIRMAWHSAGTYRISDGRGGGGAGQQRFAPLNSWPDNGNLDKARRLLWPVKKKYGQALSWADLMILAGNVALESMGFTTFGFAGGREDVWEPDEDVYWGPETTWLGDERYTGDRELENPLGAVQMGLIYVNPEGPNGTPDPLAAARDIRETFRRMAMDDEETVALIAGGHTFGKTHGAGDPDNVGPEPEGAPLETQGLGWKNAFGTGKGADAITSGLEGAWTPTPVSWDNSFFETLFGYEWALTKSPAGAYQWKPKGGAGAGTVPDAHDAAKSHAPTMLTTDLALRFDPVYEPISRRFLEHPDELADAFARAWFKLTHRDMGPVARYLGPEVPAETLLWQDPVPAVDHELVDAADVAALKVRVLASGLSVSELVATAWASASTFRGGDKRGGANGARIRLEPQRGWEVNEPDRLAAVLGTLTGIQEEFHAARTDGRRVSLADLIVLAGGAAVEQAAREAGFDVEVPFTPGRTDASQELTDVESFAALEPAADGFRNYLGKGQRLPAEYLLLDRANLLTLSAPELTVLVGGLRVLGANFRQSSLGVLTATPGVLTNDFFANLLDLGTTWRPSGEDDNVFEGRDAATGELTWTGSRVDLVFGSNSELRAFAEVYASDDAREKFVRDFVAAWAKVMNLDRYDLA.

The segment at 1-21 (MSENHETVVSELNEESGGGCP) is disordered. The segment at residues 108-231 (WHSAGTYRIS…LGAVQMGLIY (124 aa)) is a cross-link (tryptophyl-tyrosyl-methioninium (Trp-Tyr) (with M-257)). The active-site Proton acceptor is histidine 109. Residues 231–257 (YVNPEGPNGTPDPLAAARDIRETFRRM) constitute a cross-link (tryptophyl-tyrosyl-methioninium (Tyr-Met) (with W-108)). Residue histidine 272 participates in heme b binding. Residues 275–296 (GKTHGAGDPDNVGPEPEGAPLE) are disordered.

It belongs to the peroxidase family. Peroxidase/catalase subfamily. In terms of assembly, homodimer or homotetramer. Requires heme b as cofactor. Formation of the three residue Trp-Tyr-Met cross-link is important for the catalase, but not the peroxidase activity of the enzyme.

It catalyses the reaction H2O2 + AH2 = A + 2 H2O. The enzyme catalyses 2 H2O2 = O2 + 2 H2O. Functionally, bifunctional enzyme with both catalase and broad-spectrum peroxidase activity. The polypeptide is Catalase-peroxidase (Parafrankia sp. (strain EAN1pec)).